Reading from the N-terminus, the 84-residue chain is uncharacterized protein (84 aa).

A helical transmembrane segment spans residues Ile-25–Phe-45.

It localises to the membrane. This is an uncharacterized protein from Bacillus anthracis.